A 737-amino-acid polypeptide reads, in one-letter code: Relaxin receptor 2 (737 aa).

Residues Met-1–Gly-399 are Extracellular-facing. The 38-residue stretch at Leu-27–Gly-64 folds into the LDL-receptor class A domain. Cystine bridges form between Cys-28/Cys-41, Cys-35/Cys-54, and Cys-48/Cys-63. Asn-37 carries N-linked (GlcNAc...) asparagine glycosylation. An N-linked (GlcNAc...) asparagine glycan is attached at Asn-121. LRR repeat units lie at residues Asn-121–Arg-142, Glu-145–Gly-166, Asn-169–Asp-190, Gln-193–Gly-214, Ser-217–Gln-238, Gln-241–Thr-262, Ser-265–Ser-286, Asn-289–Asp-310, Leu-313–Ser-334, and Gln-337–Pro-358. N-linked (GlcNAc...) asparagine glycosylation is present at Asn-257. N-linked (GlcNAc...) asparagine glycosylation is found at Asn-318, Asn-350, and Asn-361. The chain crosses the membrane as a helical span at residues Ile-400 to Ile-420. The Cytoplasmic segment spans residues Ala-421 to Lys-438. The helical transmembrane segment at Ile-439–Ile-459 threads the bilayer. Residues Lys-460–Cys-478 lie on the Extracellular side of the membrane. A disulfide bridge links Cys-478 with Cys-556. The helical transmembrane segment at Arg-479 to Leu-501 threads the bilayer. The Cytoplasmic portion of the chain corresponds to Glu-502–Gln-520. The helical transmembrane segment at Thr-521–Thr-541 threads the bilayer. Topologically, residues Arg-542–Gly-575 are extracellular. A helical membrane pass occupies residues Ile-576 to Phe-596. The Cytoplasmic portion of the chain corresponds to Cys-597–Arg-622. The chain crosses the membrane as a helical span at residues Phe-623–Leu-643. Residues Ser-644 to Thr-653 are Extracellular-facing. A helical transmembrane segment spans residues Ile-654–Tyr-674. The Cytoplasmic portion of the chain corresponds to Thr-675 to Pro-737.

This sequence belongs to the G-protein coupled receptor 1 family. In terms of tissue distribution, expressed in embryonic and adult gonads of males and females, as well in male gubernarculum. Expressed also in brain. Not detected in kidney, spleen and heart.

It is found in the cell membrane. In terms of biological role, receptor for relaxin. The activity of this receptor is mediated by G proteins leading to stimulation of adenylate cyclase and an increase of cAMP. May also be a receptor for Leydig insulin-like peptide (INSL3). This is Relaxin receptor 2 (Rxfp2) from Mus musculus (Mouse).